A 338-amino-acid chain; its full sequence is Lipoate-protein ligase A (338 aa).

One can recognise a BPL/LPL catalytic domain in the interval 29 to 216; that stretch reads PATQRVLFLW…AFFAHYGERV (188 aa). ATP is bound by residues R71, 76 to 79, and K134; that span reads GAVF. K134 contributes to the (R)-lipoate binding site.

Belongs to the LplA family. As to quaternary structure, monomer.

It localises to the cytoplasm. The enzyme catalyses L-lysyl-[lipoyl-carrier protein] + (R)-lipoate + ATP = N(6)-[(R)-lipoyl]-L-lysyl-[lipoyl-carrier protein] + AMP + diphosphate + H(+). It participates in protein modification; protein lipoylation via exogenous pathway; protein N(6)-(lipoyl)lysine from lipoate: step 1/2. The protein operates within protein modification; protein lipoylation via exogenous pathway; protein N(6)-(lipoyl)lysine from lipoate: step 2/2. Its function is as follows. Catalyzes both the ATP-dependent activation of exogenously supplied lipoate to lipoyl-AMP and the transfer of the activated lipoyl onto the lipoyl domains of lipoate-dependent enzymes. In Escherichia coli O1:K1 / APEC, this protein is Lipoate-protein ligase A.